The following is a 187-amino-acid chain: Protein GrpE (187 aa).

A compositionally biased stretch (basic and acidic residues) spans 1–11 (MTDSSNEHETE). The disordered stretch occupies residues 1–21 (MTDSSNEHETENPSLPIPDNE).

The protein belongs to the GrpE family. As to quaternary structure, homodimer.

It is found in the cytoplasm. Its function is as follows. Participates actively in the response to hyperosmotic and heat shock by preventing the aggregation of stress-denatured proteins, in association with DnaK and GrpE. It is the nucleotide exchange factor for DnaK and may function as a thermosensor. Unfolded proteins bind initially to DnaJ; upon interaction with the DnaJ-bound protein, DnaK hydrolyzes its bound ATP, resulting in the formation of a stable complex. GrpE releases ADP from DnaK; ATP binding to DnaK triggers the release of the substrate protein, thus completing the reaction cycle. Several rounds of ATP-dependent interactions between DnaJ, DnaK and GrpE are required for fully efficient folding. The sequence is that of Protein GrpE from Chlamydia caviae (strain ATCC VR-813 / DSM 19441 / 03DC25 / GPIC) (Chlamydophila caviae).